Consider the following 574-residue polypeptide: MNAKTNIKQRLPSRHVTEGPARAPHRSYFYAMGLTTEQIHQPFVGVASCWNEAAPCNIALMRQAQAVKKGVAHAGGTPREFCTITVTDGIAMGHDGMRSSLPSRECIADSVELTVRGHAYDALVGLAGCDKSLPGMMMAMVRLNVPSIFIYGGSILPGNFRGQQVTVQDMFEAVGKHSVGAMSDEDLDEIERVACPSAGACGAQFTANTMATVSEAIGLALPYSAGAPAPYEIRDAFCMTAGEKVMELIDQNIRPRDIVTRKALENAAAVVAASGGSTNAALHLPAIAHECGIKFDLFDVAEIFKKTPYVADLKPGGRYVAKDMFEVGGIPLLMKTLLDNGFLHGDCITVTGRTIAENLKSVKWNPHQDVVHPADKPITVTGGVVGLKGNLAPEGAIVKVAGMSNLRFTGPARCFDREEDAFEAVQNRTYREGEVIVIRYEGPKGGPGMREMLQTTAALTGQGMGGKIALITDGRFSGATRGFCIGHVGPEAAIGGPIGLLEDGDIIEIDAVAGTLNVKLSDQELAQRKTKWSARATNHTTGALWKYAQQVGPAVGGAVTHPGGAHEKQCYADI.

The disordered stretch occupies residues 1–20 (MNAKTNIKQRLPSRHVTEGP). Position 56 (Cys-56) interacts with [2Fe-2S] cluster. A Mg(2+)-binding site is contributed by Asp-88. Cys-129 is a binding site for [2Fe-2S] cluster. 2 residues coordinate Mg(2+): Asp-130 and Lys-131. N6-carboxylysine is present on Lys-131. Position 201 (Cys-201) interacts with [2Fe-2S] cluster. Residue Glu-451 coordinates Mg(2+). The active-site Proton acceptor is the Ser-477.

Belongs to the IlvD/Edd family. In terms of assembly, homodimer. The cofactor is [2Fe-2S] cluster. Mg(2+) serves as cofactor.

The enzyme catalyses (2R)-2,3-dihydroxy-3-methylbutanoate = 3-methyl-2-oxobutanoate + H2O. It catalyses the reaction (2R,3R)-2,3-dihydroxy-3-methylpentanoate = (S)-3-methyl-2-oxopentanoate + H2O. It participates in amino-acid biosynthesis; L-isoleucine biosynthesis; L-isoleucine from 2-oxobutanoate: step 3/4. Its pathway is amino-acid biosynthesis; L-valine biosynthesis; L-valine from pyruvate: step 3/4. Functionally, functions in the biosynthesis of branched-chain amino acids. Catalyzes the dehydration of (2R,3R)-2,3-dihydroxy-3-methylpentanoate (2,3-dihydroxy-3-methylvalerate) into 2-oxo-3-methylpentanoate (2-oxo-3-methylvalerate) and of (2R)-2,3-dihydroxy-3-methylbutanoate (2,3-dihydroxyisovalerate) into 2-oxo-3-methylbutanoate (2-oxoisovalerate), the penultimate precursor to L-isoleucine and L-valine, respectively. In Bradyrhizobium diazoefficiens (strain JCM 10833 / BCRC 13528 / IAM 13628 / NBRC 14792 / USDA 110), this protein is Dihydroxy-acid dehydratase 2.